Consider the following 472-residue polypeptide: Trigger factor (472 aa).

The PPIase FKBP-type domain occupies 172–257; sequence GDEVRFDFKG…IKEITSVKPQ (86 aa). Composition is skewed to polar residues over residues 439 to 449 and 461 to 472; these read NQPKDTASTLS and KTSNTKKVASKK. The interval 439–472 is disordered; that stretch reads NQPKDTASTLSKQEDKPKVAKAKTSNTKKVASKK.

Belongs to the FKBP-type PPIase family. Tig subfamily.

Its subcellular location is the cytoplasm. The enzyme catalyses [protein]-peptidylproline (omega=180) = [protein]-peptidylproline (omega=0). Functionally, involved in protein export. Acts as a chaperone by maintaining the newly synthesized protein in an open conformation. Functions as a peptidyl-prolyl cis-trans isomerase. This is Trigger factor from Ureaplasma urealyticum serovar 10 (strain ATCC 33699 / Western).